The sequence spans 155 residues: SsrA-binding protein (155 aa).

Belongs to the SmpB family.

Its subcellular location is the cytoplasm. Required for rescue of stalled ribosomes mediated by trans-translation. Binds to transfer-messenger RNA (tmRNA), required for stable association of tmRNA with ribosomes. tmRNA and SmpB together mimic tRNA shape, replacing the anticodon stem-loop with SmpB. tmRNA is encoded by the ssrA gene; the 2 termini fold to resemble tRNA(Ala) and it encodes a 'tag peptide', a short internal open reading frame. During trans-translation Ala-aminoacylated tmRNA acts like a tRNA, entering the A-site of stalled ribosomes, displacing the stalled mRNA. The ribosome then switches to translate the ORF on the tmRNA; the nascent peptide is terminated with the 'tag peptide' encoded by the tmRNA and targeted for degradation. The ribosome is freed to recommence translation, which seems to be the essential function of trans-translation. The polypeptide is SsrA-binding protein (Streptococcus equi subsp. zooepidemicus (strain MGCS10565)).